Consider the following 245-residue polypeptide: 1-(5-phosphoribosyl)-5-[(5-phosphoribosylamino)methylideneamino] imidazole-4-carboxamide isomerase (245 aa).

Catalysis depends on D7, which acts as the Proton acceptor. The active-site Proton donor is D129.

This sequence belongs to the HisA/HisF family.

The protein localises to the cytoplasm. The catalysed reaction is 1-(5-phospho-beta-D-ribosyl)-5-[(5-phospho-beta-D-ribosylamino)methylideneamino]imidazole-4-carboxamide = 5-[(5-phospho-1-deoxy-D-ribulos-1-ylimino)methylamino]-1-(5-phospho-beta-D-ribosyl)imidazole-4-carboxamide. The protein operates within amino-acid biosynthesis; L-histidine biosynthesis; L-histidine from 5-phospho-alpha-D-ribose 1-diphosphate: step 4/9. The sequence is that of 1-(5-phosphoribosyl)-5-[(5-phosphoribosylamino)methylideneamino] imidazole-4-carboxamide isomerase from Shewanella pealeana (strain ATCC 700345 / ANG-SQ1).